We begin with the raw amino-acid sequence, 1168 residues long: Carbamoyl phosphate synthase arginine-specific large chain, mitochondrial (1168 aa).

The N-terminal 51 residues, M1–L51, are a transit peptide targeting the mitochondrion. The tract at residues R86 to D483 is carboxyphosphate synthetic domain. ATP is bound by residues R213, A243–V298, R253, G259, G260, K290, L292, E297, G323, I324, H325, Q366, and E380. An ATP-grasp 1 domain is found at A217–L409. Mg(2+) is bound by residues Q366, E380, and N382. 3 residues coordinate Mn(2+): Q366, E380, and N382. An oligomerization domain region spans residues P484–D628. The carbamoyl phosphate synthetic domain stretch occupies residues V629–M1017. The region spanning S754–V951 is the ATP-grasp 2 domain. Residues A780–I837, R790, K829, I831, E836, G861, V862, H863, S864, Q904, and E922 each bind ATP. 3 residues coordinate Mg(2+): Q904, E922, and N924. Mn(2+) is bound by residues Q904, E922, and N924. Residues N1018–I1152 are allosteric domain. Positions F1019–L1168 constitute an MGS-like domain.

It belongs to the CarB family. Heterodimer composed of 2 chains; the small (or glutamine) chain promotes the hydrolysis of glutamine to ammonia, which is used by the large (or ammonia) chain to synthesize carbamoyl phosphate. Mg(2+) is required as a cofactor. It depends on Mn(2+) as a cofactor.

It is found in the mitochondrion matrix. It catalyses the reaction hydrogencarbonate + L-glutamine + 2 ATP + H2O = carbamoyl phosphate + L-glutamate + 2 ADP + phosphate + 2 H(+). It carries out the reaction hydrogencarbonate + NH4(+) + 2 ATP = carbamoyl phosphate + 2 ADP + phosphate + 2 H(+). The protein operates within amino-acid biosynthesis; L-arginine biosynthesis; carbamoyl phosphate from bicarbonate: step 1/1. In terms of biological role, large subunit of the arginine-specific carbamoyl phosphate synthase (CPSase). CPSase catalyzes the formation of carbamoyl phosphate from the ammonia moiety of glutamine, hydrogencarbonate, and phosphate donated by ATP, the first step of the arginine biosynthetic pathway. The large subunit (synthetase) binds the substrates ammonia (free or transferred from glutamine from the small subunit), hydrogencarbonate and ATP and carries out an ATP-coupled ligase reaction, activating hydrogencarbonate by forming carboxy phosphate which reacts with ammonia to form carbamoyl phosphate. This is Carbamoyl phosphate synthase arginine-specific large chain, mitochondrial (arg-3) from Neurospora crassa (strain ATCC 24698 / 74-OR23-1A / CBS 708.71 / DSM 1257 / FGSC 987).